We begin with the raw amino-acid sequence, 464 residues long: MGKEKTHINIVVIGHVDSGKSTTTGHLIYKCGGIDKRTIEKFEKEAQEMGKGSFKYAWVLDKLKAERERGIQIDIALWKFETPKYYITIIDAPGHRDFIKNMITGTSQADCAVLVVACGTGEFEAGISKNGQTREHALLAQTLGVKQMIVACNKMDSTDPPFSEARFGEVTTEVSNYIKKIGYNPKSIPFVPISGFNGDNMLEPSANMPWFKGWSVERKEGTMTGKTLLEALDSVVPPQRPTDKPLRLPLQDVYKIGGIGTVPVGRVETGILKPGMIVTFAPQNLTTEVKSVEMHHEALQEALPGDNVGFNVKNISIKDIRRGSVASDSKNDPAKETKMFTAQVIIMNHPGQISAGYTPVLDCHTAHIACKFAELKEKVDRRSGKKVEDNPKSLKSGDAGIIDLIPTKPLCVETFTEYPPLGRFAVRDMRQTVAVGVIKNVDKSEGVGKVQKAAQKAGVGGKKK.

The tr-type G domain maps to 5 to 242 (KTHINIVVIG…DSVVPPQRPT (238 aa)). GTP-binding positions include 14 to 21 (GHVDSGKS), 91 to 95 (DAPGH), and 153 to 156 (NKMD). 2 positions are modified to 5-glutamyl glycerylphosphorylethanolamine: glutamate 301 and glutamate 374.

The protein belongs to the TRAFAC class translation factor GTPase superfamily. Classic translation factor GTPase family. EF-Tu/EF-1A subfamily.

The protein resides in the cytoplasm. In terms of biological role, this protein promotes the GTP-dependent binding of aminoacyl-tRNA to the A-site of ribosomes during protein biosynthesis. The protein is Elongation factor 1-alpha of Onchocerca volvulus.